The primary structure comprises 249 residues: tRNA pseudouridine synthase A (249 aa).

Aspartate 53 functions as the Nucleophile in the catalytic mechanism. Tyrosine 111 serves as a coordination point for substrate.

Belongs to the tRNA pseudouridine synthase TruA family. In terms of assembly, homodimer.

It catalyses the reaction uridine(38/39/40) in tRNA = pseudouridine(38/39/40) in tRNA. In terms of biological role, formation of pseudouridine at positions 38, 39 and 40 in the anticodon stem and loop of transfer RNAs. The protein is tRNA pseudouridine synthase A of Streptococcus pyogenes serotype M1.